The primary structure comprises 199 residues: Nucleoside triphosphate pyrophosphatase (199 aa).

Residue Asp-76 is the Proton acceptor of the active site.

This sequence belongs to the Maf family. A divalent metal cation is required as a cofactor.

The protein localises to the cytoplasm. It carries out the reaction a ribonucleoside 5'-triphosphate + H2O = a ribonucleoside 5'-phosphate + diphosphate + H(+). It catalyses the reaction a 2'-deoxyribonucleoside 5'-triphosphate + H2O = a 2'-deoxyribonucleoside 5'-phosphate + diphosphate + H(+). Nucleoside triphosphate pyrophosphatase. May have a dual role in cell division arrest and in preventing the incorporation of modified nucleotides into cellular nucleic acids. In Caulobacter vibrioides (strain ATCC 19089 / CIP 103742 / CB 15) (Caulobacter crescentus), this protein is Nucleoside triphosphate pyrophosphatase.